The following is a 235-amino-acid chain: Thiamine import ATP-binding protein ThiQ (235 aa).

Positions 2-230 (LKLIDITWLY…QASASALLGI (229 aa)) constitute an ABC transporter domain. Residue 32–39 (GPSGAGKS) coordinates ATP.

The protein belongs to the ABC transporter superfamily. Thiamine importer (TC 3.A.1.19.1) family. In terms of assembly, the complex is composed of two ATP-binding proteins (ThiQ), two transmembrane proteins (ThiP) and a solute-binding protein (ThiB).

It localises to the cell inner membrane. The catalysed reaction is thiamine(out) + ATP + H2O = thiamine(in) + ADP + phosphate + H(+). Its function is as follows. Part of the ABC transporter complex ThiBPQ involved in thiamine import. Responsible for energy coupling to the transport system. This chain is Thiamine import ATP-binding protein ThiQ, found in Salmonella choleraesuis (strain SC-B67).